Here is a 254-residue protein sequence, read N- to C-terminus: UPF0246 protein CPF_2407 (254 aa).

Belongs to the UPF0246 family.

In Clostridium perfringens (strain ATCC 13124 / DSM 756 / JCM 1290 / NCIMB 6125 / NCTC 8237 / Type A), this protein is UPF0246 protein CPF_2407.